The chain runs to 412 residues: MADTLNHLPEPQKGEDLYRYLLERVTNLEDRNTELREQLRQIEADKRYLETQKVRYEREVRKFKGEIEQMKSPPLVIGTVTDLIDENRVIVRSSAGPRFLVGISQSLNIEEIKPGARCTLNQQSLAIVEILPTNYDAQIYGMEVIEAPSERYEEIGGLEKQINEIREAVELPLKKPEVFRKMGIEPPKGVLLHGPPGTGKTLLARAVAHQTEAHFLRVVGSELVQKYIGEGARLVRELFELAKKKSPSIIFIDEIDAIGASRTESNTSGDREVHRTLMQLLAEMDGFSNRGDVRIIGATNRIDILDRALLRPGRFDRIIEIPAPDIEGRVSILNIHCAGMNIDKKVDIRDIATRTDGKNGADLRSICMEAGMFAIRSDHEMVTLEDFEQSIEKFSNDFERDSLINTSGAMFA.

Positions 15–72 form a coiled coil; sequence EDLYRYLLERVTNLEDRNTELREQLRQIEADKRYLETQKVRYEREVRKFKGEIEQMKS. ATP is bound by residues 197–202 and histidine 336; that span reads GTGKTL. The docks into pockets in the proteasome alpha-ring to cause gate opening stretch occupies residues 410-412; that stretch reads MFA.

It belongs to the AAA ATPase family. Homohexamer. The hexameric complex has a two-ring architecture resembling a top hat that caps the 20S proteasome core at one or both ends. Upon ATP-binding, the C-terminus of PAN interacts with the alpha-rings of the proteasome core by binding to the intersubunit pockets.

The protein resides in the cytoplasm. In terms of biological role, ATPase which is responsible for recognizing, binding, unfolding and translocation of substrate proteins into the archaeal 20S proteasome core particle. Is essential for opening the gate of the 20S proteasome via an interaction with its C-terminus, thereby allowing substrate entry and access to the site of proteolysis. Thus, the C-termini of the proteasomal ATPase function like a 'key in a lock' to induce gate opening and therefore regulate proteolysis. Unfolding activity requires energy from ATP hydrolysis, whereas ATP binding alone promotes ATPase-20S proteasome association which triggers gate opening, and supports translocation of unfolded substrates. This is Proteasome-activating nucleotidase from Methanosphaerula palustris (strain ATCC BAA-1556 / DSM 19958 / E1-9c).